The sequence spans 158 residues: Cyclic pyranopterin monophosphate synthase (158 aa).

Substrate-binding positions include 75 to 77 (LCH) and 113 to 114 (ME). D128 is an active-site residue.

Belongs to the MoaC family. As to quaternary structure, homohexamer; trimer of dimers.

It carries out the reaction (8S)-3',8-cyclo-7,8-dihydroguanosine 5'-triphosphate = cyclic pyranopterin phosphate + diphosphate. The protein operates within cofactor biosynthesis; molybdopterin biosynthesis. Its function is as follows. Catalyzes the conversion of (8S)-3',8-cyclo-7,8-dihydroguanosine 5'-triphosphate to cyclic pyranopterin monophosphate (cPMP). The polypeptide is Cyclic pyranopterin monophosphate synthase (Roseiflexus castenholzii (strain DSM 13941 / HLO8)).